The following is a 1402-amino-acid chain: DNA-directed RNA polymerase subunit beta' (1402 aa).

The Zn(2+) site is built by cysteine 71, cysteine 73, cysteine 86, and cysteine 89. Residues aspartate 462, aspartate 464, and aspartate 466 each coordinate Mg(2+). Zn(2+) is bound by residues cysteine 811, cysteine 885, cysteine 892, and cysteine 895.

This sequence belongs to the RNA polymerase beta' chain family. As to quaternary structure, the RNAP catalytic core consists of 2 alpha, 1 beta, 1 beta' and 1 omega subunit. When a sigma factor is associated with the core the holoenzyme is formed, which can initiate transcription. The cofactor is Mg(2+). Requires Zn(2+) as cofactor.

It catalyses the reaction RNA(n) + a ribonucleoside 5'-triphosphate = RNA(n+1) + diphosphate. Its function is as follows. DNA-dependent RNA polymerase catalyzes the transcription of DNA into RNA using the four ribonucleoside triphosphates as substrates. The chain is DNA-directed RNA polymerase subunit beta' from Rhizobium etli (strain ATCC 51251 / DSM 11541 / JCM 21823 / NBRC 15573 / CFN 42).